A 614-amino-acid chain; its full sequence is Beta-glucosidase 33 (614 aa).

An N-terminal signal peptide occupies residues 1–26 (MATATLTLFLGLLALTSTILSFNADA). Residues Gln113, His217, and 262–263 (NE) contribute to the a beta-D-glucoside site. Glu263 functions as the Proton donor in the catalytic mechanism. Cys282 and Cys290 are joined by a disulfide. N-linked (GlcNAc...) asparagine glycosylation occurs at Asn344. Tyr407 contributes to the a beta-D-glucoside binding site. N-linked (GlcNAc...) asparagine glycosylation is found at Asn419, Asn432, and Asn439. A beta-D-glucoside is bound at residue Glu479. Catalysis depends on Glu479, which acts as the Nucleophile. Asn491 is a glycosylation site (N-linked (GlcNAc...) asparagine). A beta-D-glucoside contacts are provided by residues Trp529, 536–537 (EW), and Phe545.

Belongs to the glycosyl hydrolase 1 family.

It catalyses the reaction Hydrolysis of terminal, non-reducing beta-D-glucosyl residues with release of beta-D-glucose.. This is Beta-glucosidase 33 from Arabidopsis thaliana (Mouse-ear cress).